A 122-amino-acid chain; its full sequence is Small ribosomal subunit protein uS13 (122 aa).

Residues 97–122 (PVRGQRTHTNARTRKGPAKAIAGKKK) are disordered.

This sequence belongs to the universal ribosomal protein uS13 family. Part of the 30S ribosomal subunit. Forms a loose heterodimer with protein S19. Forms two bridges to the 50S subunit in the 70S ribosome.

Functionally, located at the top of the head of the 30S subunit, it contacts several helices of the 16S rRNA. In the 70S ribosome it contacts the 23S rRNA (bridge B1a) and protein L5 of the 50S subunit (bridge B1b), connecting the 2 subunits; these bridges are implicated in subunit movement. Contacts the tRNAs in the A and P-sites. The protein is Small ribosomal subunit protein uS13 of Bartonella tribocorum (strain CIP 105476 / IBS 506).